Here is a 364-residue protein sequence, read N- to C-terminus: Phosphoserine aminotransferase (364 aa).

An L-glutamate-binding site is contributed by Arg-40. Pyridoxal 5'-phosphate-binding positions include 74 to 75 (GT), Trp-100, Thr-149, Asp-170, and Gln-193. Lys-194 carries the post-translational modification N6-(pyridoxal phosphate)lysine. Pyridoxal 5'-phosphate is bound at residue 235-236 (NT).

This sequence belongs to the class-V pyridoxal-phosphate-dependent aminotransferase family. SerC subfamily. Homodimer. Pyridoxal 5'-phosphate is required as a cofactor. As to expression, expressed in ovary and head.

It catalyses the reaction O-phospho-L-serine + 2-oxoglutarate = 3-phosphooxypyruvate + L-glutamate. The enzyme catalyses 4-(phosphooxy)-L-threonine + 2-oxoglutarate = (R)-3-hydroxy-2-oxo-4-phosphooxybutanoate + L-glutamate. It functions in the pathway amino-acid biosynthesis; L-serine biosynthesis; L-serine from 3-phospho-D-glycerate: step 2/3. Its pathway is cofactor biosynthesis; pyridoxine 5'-phosphate biosynthesis; pyridoxine 5'-phosphate from D-erythrose 4-phosphate: step 3/5. Its function is as follows. Catalyzes the reversible conversion of 3-phosphohydroxypyruvate to phosphoserine and of 3-hydroxy-2-oxo-4-phosphonooxybutanoate to phosphohydroxythreonine. This chain is Phosphoserine aminotransferase, found in Drosophila melanogaster (Fruit fly).